Reading from the N-terminus, the 637-residue chain is ATP-dependent zinc metalloprotease FtsH (637 aa).

The Cytoplasmic portion of the chain corresponds to 1–7 (MNRVFRN). Residues 8-28 (TIFYLLILLVVIGVVSYFQTS) traverse the membrane as a helical segment. Residues 29–109 (NPKTENMSYS…VEPAQETSGW (81 aa)) lie on the Extracellular side of the membrane. A helical membrane pass occupies residues 110 to 130 (VTFLTTIIPFVIIFILFFFLL). Residues 131–637 (NQAQGGGSRV…TEEKKDDTKE (507 aa)) lie on the Cytoplasmic side of the membrane. 201–208 (GPPGTGKT) is an ATP binding site. Zn(2+) is bound at residue His-423. The active site involves Glu-424. Zn(2+) is bound by residues His-427 and Asp-499. The interval 514 to 637 (FGMSEKLGPL…TEEKKDDTKE (124 aa)) is not necessary for FtsH function.

The protein in the central section; belongs to the AAA ATPase family. This sequence in the C-terminal section; belongs to the peptidase M41 family. As to quaternary structure, homohexamer. Interacts with FloT at midcell. Interacts with FloA at midcell. Another study shows only minor colocalization with FloA or FloT. Requires Zn(2+) as cofactor.

The protein resides in the cell membrane. It localises to the membrane raft. Functionally, acts as a processive, ATP-dependent zinc metallopeptidase for both cytoplasmic and membrane proteins. Plays a role in the quality control of integral membrane proteins. In terms of biological role, in vitro partially degrades Spo0E, the phosphatase that acts on Spo0A-P. Recognition requires the last 14 residues of Spo0E. Its stabile accumulation requires FlotA and Flot. May degrade EzrA. The protein is ATP-dependent zinc metalloprotease FtsH of Bacillus subtilis (strain 168).